We begin with the raw amino-acid sequence, 477 residues long: Bifunctional protein HldE (477 aa).

Residues M1–T318 form a ribokinase region. ATP is bound at residue N195–E198. D264 is a catalytic residue. Positions M344–D477 are cytidylyltransferase.

It in the N-terminal section; belongs to the carbohydrate kinase PfkB family. In the C-terminal section; belongs to the cytidylyltransferase family. As to quaternary structure, homodimer.

It carries out the reaction D-glycero-beta-D-manno-heptose 7-phosphate + ATP = D-glycero-beta-D-manno-heptose 1,7-bisphosphate + ADP + H(+). The enzyme catalyses D-glycero-beta-D-manno-heptose 1-phosphate + ATP + H(+) = ADP-D-glycero-beta-D-manno-heptose + diphosphate. Its pathway is nucleotide-sugar biosynthesis; ADP-L-glycero-beta-D-manno-heptose biosynthesis; ADP-L-glycero-beta-D-manno-heptose from D-glycero-beta-D-manno-heptose 7-phosphate: step 1/4. The protein operates within nucleotide-sugar biosynthesis; ADP-L-glycero-beta-D-manno-heptose biosynthesis; ADP-L-glycero-beta-D-manno-heptose from D-glycero-beta-D-manno-heptose 7-phosphate: step 3/4. Functionally, catalyzes the phosphorylation of D-glycero-D-manno-heptose 7-phosphate at the C-1 position to selectively form D-glycero-beta-D-manno-heptose-1,7-bisphosphate. In terms of biological role, catalyzes the ADP transfer from ATP to D-glycero-beta-D-manno-heptose 1-phosphate, yielding ADP-D-glycero-beta-D-manno-heptose. The protein is Bifunctional protein HldE of Edwardsiella ictaluri (strain 93-146).